The chain runs to 565 residues: Membrane protein insertase YidC (565 aa).

Helical transmembrane passes span 6–26 (VLLI…WSKN), 348–368 (LMAL…SLLH), 370–390 (WGWA…PLSA), 437–457 (GGCF…WVLV), 479–499 (PYFI…KLTP), and 516–536 (PLIF…YWVI).

It belongs to the OXA1/ALB3/YidC family. Type 1 subfamily. Interacts with the Sec translocase complex via SecD. Specifically interacts with transmembrane segments of nascent integral membrane proteins during membrane integration.

It localises to the cell inner membrane. Its function is as follows. Required for the insertion and/or proper folding and/or complex formation of integral membrane proteins into the membrane. Involved in integration of membrane proteins that insert both dependently and independently of the Sec translocase complex, as well as at least some lipoproteins. Aids folding of multispanning membrane proteins. This is Membrane protein insertase YidC from Xylella fastidiosa (strain M23).